We begin with the raw amino-acid sequence, 382 residues long: UDP-4-amino-4-deoxy-L-arabinose--oxoglutarate aminotransferase (382 aa).

Lys-183 carries the post-translational modification N6-(pyridoxal phosphate)lysine.

This sequence belongs to the DegT/DnrJ/EryC1 family. ArnB subfamily. Homodimer. Requires pyridoxal 5'-phosphate as cofactor.

The enzyme catalyses UDP-4-amino-4-deoxy-beta-L-arabinose + 2-oxoglutarate = UDP-beta-L-threo-pentopyranos-4-ulose + L-glutamate. Its pathway is nucleotide-sugar biosynthesis; UDP-4-deoxy-4-formamido-beta-L-arabinose biosynthesis; UDP-4-deoxy-4-formamido-beta-L-arabinose from UDP-alpha-D-glucuronate: step 2/3. It functions in the pathway bacterial outer membrane biogenesis; lipopolysaccharide biosynthesis. Catalyzes the conversion of UDP-4-keto-arabinose (UDP-Ara4O) to UDP-4-amino-4-deoxy-L-arabinose (UDP-L-Ara4N). The modified arabinose is attached to lipid A and is required for resistance to polymyxin and cationic antimicrobial peptides. This Pseudomonas fluorescens (strain Pf0-1) protein is UDP-4-amino-4-deoxy-L-arabinose--oxoglutarate aminotransferase.